A 394-amino-acid chain; its full sequence is Multidrug resistance protein D (394 aa).

The Cytoplasmic segment spans residues 1–8 (MKRQRNVN). A helical transmembrane segment spans residues 9–29 (LLLMLVLLVAVGQMAQTIYIP). The Periplasmic segment spans residues 30–46 (AIADMARDLNVREGAVQ). The helical transmembrane segment at 47 to 67 (SVMGAYLLTYGVSQLFYGPIS) threads the bilayer. Residues 68 to 73 (DRVGRR) are Cytoplasmic-facing. The helical transmembrane segment at 74–94 (PVILVGMSIFMLATLVAVTTS) threads the bilayer. A topological domain (periplasmic) is located at residue Ser-95. Residues 96–116 (LTVLIAASAMQGMGTGVGGVM) form a helical membrane-spanning segment. The Cytoplasmic portion of the chain corresponds to 117-134 (ARTLPRDLYERTQLRHAN). Residues 135 to 155 (SLLNMGILVSPLLAPLIGGLL) traverse the membrane as a helical segment. The Periplasmic segment spans residues 156-162 (DTMWNWR). The chain crosses the membrane as a helical span at residues 163 to 183 (ACYLFLLVLCAGVTFSMARWM). Over 184–212 (PETRPVDAPRTRLLTSYKTLFGNSGFNCY) the chain is Cytoplasmic. A helical membrane pass occupies residues 213-233 (LLMLIGGLAGIAAFEACSGVL). Residues 234–242 (MGAVLGLSS) lie on the Periplasmic side of the membrane. Residues 243–263 (MTVSILFILPIPAAFFGAWFA) traverse the membrane as a helical segment. Residues 264–276 (GRPNKRFSTLMWQ) are Cytoplasmic-facing. The helical transmembrane segment at 277–297 (SVICCLLAGLLMWIPDWFGVM) threads the bilayer. Residue Asn-298 is a topological domain, periplasmic. The helical transmembrane segment at 299–319 (VWTLLVPAALFFFGAGMLFPL) threads the bilayer. The Cytoplasmic portion of the chain corresponds to 320–329 (ATSGAMEPFP). The chain crosses the membrane as a helical span at residues 330–350 (FLAGTAGALVGGLQNIGSGVL). Topologically, residues 351–364 (ASLSAMLPQTGQGS) are periplasmic. A helical transmembrane segment spans residues 365 to 385 (LGLLMTLMGLLIVLCWLPLAT). At 386–394 (RMSHQGQPV) the chain is on the cytoplasmic side.

This sequence belongs to the major facilitator superfamily.

The protein resides in the cell inner membrane. In terms of biological role, multidrug resistance pump that participates in a low energy shock adaptive response. The polypeptide is Multidrug resistance protein D (emrD) (Escherichia coli (strain K12)).